Reading from the N-terminus, the 394-residue chain is 1-deoxy-D-xylulose 5-phosphate reductoisomerase (394 aa).

NADPH contacts are provided by Thr-10, Gly-11, Ser-12, Ile-13, Gly-38, Arg-39, Asn-40, and Asn-123. Residue Lys-124 coordinates 1-deoxy-D-xylulose 5-phosphate. Glu-125 serves as a coordination point for NADPH. Mn(2+) is bound at residue Asp-149. 1-deoxy-D-xylulose 5-phosphate-binding residues include Ser-150, Glu-151, Ser-175, and His-198. Residue Glu-151 coordinates Mn(2+). Residue Gly-204 coordinates NADPH. The 1-deoxy-D-xylulose 5-phosphate site is built by Ser-211, Asn-216, Lys-217, and Glu-220. Glu-220 serves as a coordination point for Mn(2+).

The protein belongs to the DXR family. The cofactor is Mg(2+). Mn(2+) serves as cofactor.

It catalyses the reaction 2-C-methyl-D-erythritol 4-phosphate + NADP(+) = 1-deoxy-D-xylulose 5-phosphate + NADPH + H(+). It functions in the pathway isoprenoid biosynthesis; isopentenyl diphosphate biosynthesis via DXP pathway; isopentenyl diphosphate from 1-deoxy-D-xylulose 5-phosphate: step 1/6. In terms of biological role, catalyzes the NADPH-dependent rearrangement and reduction of 1-deoxy-D-xylulose-5-phosphate (DXP) to 2-C-methyl-D-erythritol 4-phosphate (MEP). The chain is 1-deoxy-D-xylulose 5-phosphate reductoisomerase from Cereibacter sphaeroides (strain ATCC 17029 / ATH 2.4.9) (Rhodobacter sphaeroides).